The primary structure comprises 850 residues: Mitogen-activated protein kinase kinase kinase 11 (850 aa).

The residue at position 11 (S11) is a Phosphoserine. The span at 18 to 31 shows a compositional bias: gly residues; the sequence is GSGSGGGGGSGGVR. The disordered stretch occupies residues 18 to 37; the sequence is GSGSGGGGGSGGVRPEGSPK. A Phosphoserine modification is found at S35. The region spanning 42–106 is the SH3 domain; that stretch reads YANPVWTALF…PSNYVSRGGG (65 aa). Positions 118-380 constitute a Protein kinase domain; that stretch reads LRLEEVIGIG…ASILQQLEAL (263 aa). Residues 124 to 132 and K145 each bind ATP; that span reads IGIGGFGKV. Residue D242 is the Proton acceptor of the active site. T278 carries the phosphothreonine; by autocatalysis modification. A Phosphoserine; by autocatalysis and MAP4K1 modification is found at S282. S395 is subject to Phosphoserine. Leucine-zipper regions lie at residues 404 to 425 and 439 to 460; these read IQGL…EEEL and LRRR…ELTL. Phosphoserine occurs at positions 508, 525, 549, 556, and 557. Positions 536 to 850 are disordered; it reads LEPAESGQTW…QAPWAPEAGP (315 aa). Residues 551–563 show a composition bias toward basic and acidic residues; that stretch reads RRLDDSSNGERRA. A compositionally biased stretch (low complexity) spans 598-610; it reads SSPLGSPSTPPAL. S655 carries the phosphoserine modification. Over residues 677–693 the composition is skewed to pro residues; it reads TAPPPAQMASPCPPDLP. T712 bears the Phosphothreonine mark. S728, S731, S743, S751, S761, S773, S792, S796, and S818 each carry phosphoserine. Over residues 790 to 802 the composition is skewed to pro residues; sequence RPSPLPSPQPAPR. The segment covering 803 to 819 has biased composition (low complexity); that stretch reads RAPWTLFPDSDPFWDSP.

This sequence belongs to the protein kinase superfamily. STE Ser/Thr protein kinase family. MAP kinase kinase kinase subfamily. In terms of assembly, homodimer; undergoes dimerization during activation. Interacts with MAP2K4/MKK4. Interacts with MAP2K7/MKK7. Found in a complex with SH3RF1, RAC1, MAP2K7/MKK7, MAPK8IP1/JIP1 and MAPK8/JNK1. Mg(2+) serves as cofactor. In terms of processing, autophosphorylation on serine and threonine residues within the activation loop plays a role in enzyme activation. Thr-278 is likely to be the main autophosphorylation site. Phosphorylation of Ser-556 and Ser-557 is induced by CDC42.

The protein localises to the cytoplasm. It localises to the cytoskeleton. The protein resides in the microtubule organizing center. Its subcellular location is the centrosome. The catalysed reaction is L-seryl-[protein] + ATP = O-phospho-L-seryl-[protein] + ADP + H(+). The enzyme catalyses L-threonyl-[protein] + ATP = O-phospho-L-threonyl-[protein] + ADP + H(+). Homodimerization via the leucine zipper domains is required for autophosphorylation and subsequent activation. Its function is as follows. Activates the JUN N-terminal pathway. Required for serum-stimulated cell proliferation and for mitogen and cytokine activation of MAPK14 (p38), MAPK3 (ERK) and MAPK8 (JNK1) through phosphorylation and activation of MAP2K4/MKK4 and MAP2K7/MKK7. Plays a role in mitogen-stimulated phosphorylation and activation of BRAF, but does not phosphorylate BRAF directly. Influences microtubule organization during the cell cycle. This Rattus norvegicus (Rat) protein is Mitogen-activated protein kinase kinase kinase 11 (Map3k11).